Here is a 125-residue protein sequence, read N- to C-terminus: UPF0231 protein APP7_1023 (125 aa).

This sequence belongs to the UPF0231 family.

This Actinobacillus pleuropneumoniae serotype 7 (strain AP76) protein is UPF0231 protein APP7_1023.